We begin with the raw amino-acid sequence, 364 residues long: SVP1-like protein 2 (364 aa).

WD repeat units lie at residues 173 to 213 (AHDS…KICE) and 218 to 257 (YQHT…NTIR).

The protein belongs to the WD repeat PROPPIN family.

Its subcellular location is the vacuole membrane. The protein resides in the cytoplasmic vesicle membrane. It is found in the preautophagosomal structure membrane. In terms of biological role, involved in mitochondrial or peroxisomal functions and amino acid signaling pathways. In Schizosaccharomyces pombe (strain 972 / ATCC 24843) (Fission yeast), this protein is SVP1-like protein 2 (hsv2).